We begin with the raw amino-acid sequence, 418 residues long: Caveolae-associated protein 2 (418 aa).

Positions 1–42 are disordered; that stretch reads MGEDAAQAEKFQHPNTDMLQEKPSSPSPMPSSTPSPSLNLGS. Gly-2 is modified (N-acetylglycine). The tract at residues 2–168 is interaction with CAVIN1; the sequence is GEDAAQAEKF…IFQEESEIPA (167 aa). 4 positions are modified to phosphoserine: Ser-27, Ser-35, Ser-37, and Ser-51. Coiled coils occupy residues 61 to 87 and 126 to 268; these read LLDKLVNMLDAVRENQHNMEQRQINLE and RAVR…VERR. The segment at 62-100 is leucine-zipper; sequence LDKLVNMLDAVRENQHNMEQRQINLEGSVKGIQNDLTKL. Residue Thr-196 is modified to Phosphothreonine. 2 disordered regions span residues 200–238 and 262–382; these read VDLSSDDELPRDEEALEDSAEEKMEESRAEKIKRSSLKK and IVSV…ALQQ. Phosphoserine occurs at positions 203, 204, and 218. Positions 203–219 are enriched in acidic residues; sequence SSDDELPRDEEALEDSA. The segment covering 220–238 has biased composition (basic and acidic residues); the sequence is EEKMEESRAEKIKRSSLKK. The span at 275 to 287 shows a compositional bias: polar residues; the sequence is LTPNHQKASSGKS. Phosphoserine occurs at positions 283, 284, 287, 288, 293, and 296. Residues 303–321 show a composition bias toward basic and acidic residues; the sequence is REGESSVENETKLEDQMQE. Phosphoserine occurs at positions 327, 336, 359, and 363. Residues 355-366 are compositionally biased toward polar residues; sequence RGNNSAVGSNAD. A Phosphothreonine modification is found at Thr-368. The segment covering 368–377 has biased composition (acidic residues); that stretch reads TIEEDEEEEP. Position 388 is a phosphotyrosine (Tyr-388). Residues Ser-390 and Ser-396 each carry the phosphoserine modification. A disordered region spans residues 396 to 418; that stretch reads SEEMEEPSEKQVQPAVLHVDQTA.

Belongs to the CAVIN family. As to quaternary structure, component of the CAVIN complex composed of CAVIN1, CAVIN2, CAVIN3 and CAVIN4. Binds to PRKCA in the presence of phosphatidylserine. Interacts with CAVIN4; this augments the transactivation of NPPA by CAVIN4. Interacts with CAVIN1. Interacts with CAV3. In terms of processing, the N-terminus is blocked. Heart, adipose tissue, lung and endothelial cells (at protein level). Highly expressed in kidney and expressed at lower levels in liver, spleen, thymus, stomach, intestine and uterus.

It localises to the cytoplasm. Its subcellular location is the cytosol. The protein resides in the membrane. The protein localises to the caveola. Functionally, plays an important role in caveolar biogenesis and morphology. Regulates caveolae morphology by inducing membrane curvature within caveolae. Plays a role in caveola formation in a tissue-specific manner. Required for the formation of caveolae in the lung and fat endothelia but not in the heart endothelia. Negatively regulates the size or stability of CAVIN complexes in the lung endothelial cells. May play a role in targeting PRKCA to caveolae. This Mus musculus (Mouse) protein is Caveolae-associated protein 2 (Cavin2).